A 1008-amino-acid polypeptide reads, in one-letter code: Histone deacetylase complex subunit SAP130-A (1008 aa).

The span at 1–31 (MNSQQFPRQAASMPSPQVSNSGASVGQNVQG) shows a compositional bias: polar residues. Disordered stretches follow at residues 1-44 (MNSQ…DVQS), 113-134 (SKSTMPSRPIAPAPPSAMSAVP), 415-435 (IQSDYGTERGNLIPIPGHRAS), and 617-720 (TPGG…PATI). Positions 35–44 (EVARDMDVQS) are enriched in basic and acidic residues. Residues 618–644 (PGGTTVMQSHSQSPGIGSSPAQGSSPR) are compositionally biased toward polar residues. Positions 678–697 (ADQPSAAASLPSSHHPAAAV) are enriched in low complexity.

Belongs to the SAP130 family.

The protein resides in the nucleus. Its function is as follows. Acts as a transcriptional repressor. In Xenopus laevis (African clawed frog), this protein is Histone deacetylase complex subunit SAP130-A (sap130-a).